Here is a 292-residue protein sequence, read N- to C-terminus: Glutamyl-Q tRNA(Asp) synthetase (292 aa).

Residues 11 to 15 (RFAPS) and glutamate 47 contribute to the L-glutamate site. A 'HIGH' region motif is present at residues 14–24 (PSPTGPLHFGS). The Zn(2+) site is built by cysteine 103, cysteine 105, tyrosine 116, and cysteine 120. Tyrosine 173 and arginine 191 together coordinate L-glutamate. Positions 229–233 (KLSKQ) match the 'KMSKS' region motif. Residue lysine 232 participates in ATP binding.

This sequence belongs to the class-I aminoacyl-tRNA synthetase family. GluQ subfamily. The cofactor is Zn(2+).

Functionally, catalyzes the tRNA-independent activation of glutamate in presence of ATP and the subsequent transfer of glutamate onto a tRNA(Asp). Glutamate is transferred on the 2-amino-5-(4,5-dihydroxy-2-cyclopenten-1-yl) moiety of the queuosine in the wobble position of the QUC anticodon. The sequence is that of Glutamyl-Q tRNA(Asp) synthetase from Acinetobacter baylyi (strain ATCC 33305 / BD413 / ADP1).